The sequence spans 475 residues: NADH-ubiquinone oxidoreductase chain 2 (475 aa).

13 helical membrane passes run 45–65 (LAVL…GIQY), 82–102 (APIV…LTTT), 112–132 (IALL…VNDL), 133–153 (IPLY…TGVY), 162–182 (AAIL…LSSA), 198–220 (TYYS…ALVF), 240–260 (LYIT…FIYL), 262–282 (IHLF…AVAA), 291–311 (IKSI…TAVL), 318–338 (YIYI…ILAI), 365–385 (LCIA…LPGF), 402–422 (LEAL…AYII), and 447–467 (FIIS…PTLL).

Belongs to the complex I subunit 2 family.

The protein resides in the mitochondrion inner membrane. The enzyme catalyses a ubiquinone + NADH + 5 H(+)(in) = a ubiquinol + NAD(+) + 4 H(+)(out). Its function is as follows. Core subunit of the mitochondrial membrane respiratory chain NADH dehydrogenase (Complex I) that is believed to belong to the minimal assembly required for catalysis. Complex I functions in the transfer of electrons from NADH to the respiratory chain. The immediate electron acceptor for the enzyme is believed to be ubiquinone. This chain is NADH-ubiquinone oxidoreductase chain 2 (NAD2), found in Candida albicans (strain SC5314 / ATCC MYA-2876) (Yeast).